The sequence spans 331 residues: Phosphate acyltransferase (331 aa).

It belongs to the PlsX family. As to quaternary structure, homodimer. Probably interacts with PlsY.

It localises to the cytoplasm. It catalyses the reaction a fatty acyl-[ACP] + phosphate = an acyl phosphate + holo-[ACP]. It functions in the pathway lipid metabolism; phospholipid metabolism. Functionally, catalyzes the reversible formation of acyl-phosphate (acyl-PO(4)) from acyl-[acyl-carrier-protein] (acyl-ACP). This enzyme utilizes acyl-ACP as fatty acyl donor, but not acyl-CoA. This Lactococcus lactis subsp. cremoris (strain SK11) protein is Phosphate acyltransferase.